The primary structure comprises 645 residues: Sodium/hydrogen exchanger 9 (645 aa).

The Lumenal segment spans residues 1–20 (MERQSRVMSEKDEYQFQHQG). A helical transmembrane segment spans residues 21 to 41 (AVELLVFNFLLILTILTIWLF). At 42 to 45 (KNHR) the chain is on the cytoplasmic side. The helical transmembrane segment at 46 to 66 (FRFLHETGGAMVYGLIMGLIL) threads the bilayer. The Lumenal segment spans residues 67–126 (RYATAPTDIESGTVYDCVKLTFSPSTLLVNITDQVYEYKYKREISQHNINPHQGNAILEK). The N-linked (GlcNAc...) asparagine glycan is linked to asparagine 96. The helical transmembrane segment at 127 to 147 (MTFDPEIFFNVLLPPIIFHAG) threads the bilayer. The Cytoplasmic portion of the chain corresponds to 148 to 164 (YSLKKRHFFQNLGSILT). A helical membrane pass occupies residues 165–185 (YAFLGTAISCIVIGLIMYGFV). Over 186 to 203 (KAMIHAGQLKNGDFHFTD) the chain is Lumenal. A helical transmembrane segment spans residues 204–224 (CLFFGSLMSATDPVTVLAIFH). The Cytoplasmic segment spans residues 225–235 (ELHVDPDLYTL). A helical membrane pass occupies residues 236 to 256 (LFGESVLNDAVAIVLTYSISI). Residues 257-277 (YSPKENPNAFDAAAFFQSVGN) are Lumenal-facing. A helical membrane pass occupies residues 278–298 (FLGIFAGSFAMGSAYAIITAL). The Cytoplasmic portion of the chain corresponds to 299–301 (LTK). A run of 2 helical transmembrane segments spans residues 302-322 (FTKLCEFPMLETGLFFLLSWS) and 323-343 (AFLSAEAAGLTGIVAVLFCGV). Residues 344–364 (TQAHYTYNNLSSDSKIRTKQL) lie on the Cytoplasmic side of the membrane. Residues 365 to 385 (FEFMNFLAENVIFCYMGLALF) traverse the membrane as a helical segment. A topological domain (lumenal) is located at residue threonine 386. Residues 387–407 (FQNHIFNALFILGAFLAIFVA) traverse the membrane as a helical segment. Residues 408–429 (RACNIYPLSFLLNLGRKQKIPW) lie on the Cytoplasmic side of the membrane. Residues 430-450 (NFQHMMMFSGLRGAIAFALAI) traverse the membrane as a helical segment. Residues 451-465 (RNTESQPKQMMFTTT) are Lumenal-facing. Residues 466-486 (LLLVFFTVWVFGGGTTPMLTW) traverse the membrane as a helical segment. Residues 487 to 645 (LQIRVGVDLD…EQTLGQSQLN (159 aa)) lie on the Cytoplasmic side of the membrane. A disordered region spans residues 594 to 622 (QASSPCSPPARLGLDQKASPQTPGKENIY).

It belongs to the monovalent cation:proton antiporter 1 (CPA1) transporter (TC 2.A.36) family. As to quaternary structure, homodimer; phosphatidylinositol-4,5-bisphosphate (PIP2) and phosphatidylinositol 3,4,5-trisphosphate (PIP3) could be involved in the dimer stabilization. Interacts (via the C-terminus) with RACK1. Interacts with CHP1. In terms of tissue distribution, ubiquitously expressed in all tissues tested. Expressed at highest levels in heart and skeletal muscle, followed by placenta, kidney, and liver. Expressed in the brain, in the medulla and spinal cord.

The protein resides in the late endosome membrane. Its subcellular location is the early endosome membrane. It is found in the recycling endosome membrane. It localises to the cell membrane. The protein localises to the cytoplasmic vesicle. The protein resides in the phagosome membrane. The catalysed reaction is Na(+)(in) + H(+)(out) = Na(+)(out) + H(+)(in). It catalyses the reaction K(+)(in) + H(+)(out) = K(+)(out) + H(+)(in). Functionally, endosomal Na(+), K(+)/H(+) antiporter. Mediates the electroneutral exchange of endosomal luminal H(+) for a cytosolic Na(+) or K(+). By facilitating proton efflux, SLC9A9 counteracts the acidity generated by vacuolar (V)-ATPase, thereby limiting luminal acidification. Regulates organellar pH and consequently, e.g., endosome maturation and endocytic trafficking of plasma membrane receptors and neurotransporters. Promotes the recycling of transferrin receptors back to the cell surface to facilitate additional iron uptake in the brain. Regulates synaptic transmission by regulating the luminal pH of axonal endosomes. Regulates phagosome lumenal pH, thus affecting phagosome maturation, and consequently, microbicidal activity in macrophages. Can also be active at the cell surface of specialized cells, e.g., in the inner ear hair bundles uses the high K(+) of the endolymph to regulate intracelular pH. The chain is Sodium/hydrogen exchanger 9 from Homo sapiens (Human).